We begin with the raw amino-acid sequence, 501 residues long: Acetylcholine receptor subunit beta (501 aa).

A signal peptide spans 1 to 23; that stretch reads MTPGALLMLLGALGAPLAPGVRG. Over 24 to 244 the chain is Extracellular; that stretch reads SEAEGRLREK…VIFYLIIRRK (221 aa). Cysteine 151 and cysteine 165 are disulfide-bonded. An N-linked (GlcNAc...) asparagine glycan is attached at asparagine 164. The next 3 helical transmembrane spans lie at 245–269, 277–295, and 311–332; these read PLFY…VFYL, MGLS…LLLA, and YLMF…VLNL. Over 333 to 469 the chain is Cytoplasmic; the sequence is HHRSPHTHQM…WQFVAMVVDR (137 aa). Position 390 is a phosphotyrosine; by Tyr-kinases (tyrosine 390). Residues 470–488 traverse the membrane as a helical segment; that stretch reads LFLWTFIIFTSVGTLVIFL.

The protein belongs to the ligand-gated ion channel (TC 1.A.9) family. Acetylcholine receptor (TC 1.A.9.1) subfamily. Beta-1/CHRNB1 sub-subfamily. As to quaternary structure, pentamer of two alpha chains, and one each of the beta, delta, and gamma (in immature muscle) or epsilon (in mature muscle) chains. The muscle heteropentamer composed of alpha-1, beta-1, delta, epsilon subunits interacts with the alpha-conotoxin ImII.

The protein localises to the postsynaptic cell membrane. The protein resides in the cell membrane. It catalyses the reaction K(+)(in) = K(+)(out). The catalysed reaction is Na(+)(in) = Na(+)(out). In terms of biological role, after binding acetylcholine, the AChR responds by an extensive change in conformation that affects all subunits and leads to opening of an ion-conducting channel across the plasma membrane. The sequence is that of Acetylcholine receptor subunit beta from Homo sapiens (Human).